An 812-amino-acid polypeptide reads, in one-letter code: MRLSRQLLRSTPFLTRAKPVSGKVSHFRSRTDLKGGSSNSSKSPDSVGDGASAHLRHIFDDQKYFNSFTKSAAETSGKVSSLPAIFSFRRSGLFCNDNLSTPHGLIDFSKNSLREAKSLVESMLHDVKSDPAGRLSYINKLDQLSDILCRVIDVAEFIRVAHPSQKWVNAAQQTHEIMFEYMNQLNTNVELYQNLRDILSDSSVTAQLTEEEIQVGEYLKQDFERSGIHMNPSARNNFVAITQEISLLGSRFNNEIHNLKSYWCEIPRYEFEQLEDSNLKKEILGYQSKAPPSKHSSQTISIPLVGHIPFTILTTCSIESIRREIWISLHNSSDEQIATLNNFLKYRATLAKMLGYKSFSHYQLEHKMAKNPENVVTFLTNLQKSLREKGVTEEIKKLYQYRDDSTISQVQKASTEDIIDGVKPWDRDYLLEKLQKASNKNLEELENINEYLSVGTIVAGLSELFKSIYNVEFVPVATLKGETWDQNQVRKVAVVDDSTKKKLGFLYLDFWSPKVLPSHFTIVCSRKLNLDIKSETKDKMRQLVQLDEDETSQLPVISLICNFQKSNDGHIGRFAGVENEKPTLLSLNQVDTVFHEMGHAMHSMIGRTDLHNLSGTRCATDFVELPSVLMESFSKDPRVLCKIAKHYETGEPLSPKLLAQHQTQKVMLDECETYMQSKMAMLDQVLHSEDVVRTISEDFANFDSTPIYHSLESKLKVFADTWSTWHGKFPHLFSYGAVYYSYLLDRAIAEKIWNGLFAHDPWSREAGEKYKNSILKWGGTRDPWECLADALENDELSKGDSRAMEIIGKDSL.

The transit peptide at 1-29 directs the protein to the mitochondrion; that stretch reads MRLSRQLLRSTPFLTRAKPVSGKVSHFRS. Residues 19–49 are disordered; it reads PVSGKVSHFRSRTDLKGGSSNSSKSPDSVGD. The segment covering 37-46 has biased composition (low complexity); sequence SSNSSKSPDS. Position 595 (His-595) interacts with Zn(2+). The active site involves Glu-596. Residues His-599 and His-602 each contribute to the Zn(2+) site.

This sequence belongs to the peptidase M3 family. It depends on Zn(2+) as a cofactor.

The protein localises to the mitochondrion matrix. The enzyme catalyses Release of an N-terminal octapeptide as second stage of processing of some proteins imported into the mitochondrion.. In terms of biological role, cleaves proteins, imported into the mitochondrion, to their mature size. While most mitochondrial precursor proteins are processed to the mature form in one step by mitochondrial processing peptidase (MPP), the sequential cleavage by MIP of an octapeptide after initial processing by MPP is a required step for a subgroup of nuclear-encoded precursor proteins destined for the matrix or the inner membrane. The polypeptide is Mitochondrial intermediate peptidase (OCT1) (Scheffersomyces stipitis (strain ATCC 58785 / CBS 6054 / NBRC 10063 / NRRL Y-11545) (Yeast)).